We begin with the raw amino-acid sequence, 108 residues long: Parvalbumin beta 2 (108 aa).

Residue Ala-1 is modified to N-acetylalanine. 2 consecutive EF-hand domains span residues 38-73 (KSAA…FSAG) and 77-108 (LTDA…MVKG). The Ca(2+) site is built by Asp-51, Asp-53, Ser-55, Phe-57, Glu-59, Glu-62, Asp-90, Asp-92, Asp-94, Lys-96, and Glu-101.

The protein belongs to the parvalbumin family.

In terms of biological role, in muscle, parvalbumin is thought to be involved in relaxation after contraction. It binds two calcium ions. This Merluccius bilinearis (Silver hake) protein is Parvalbumin beta 2.